Consider the following 308-residue polypeptide: Testis-specific Y-encoded protein 3 (308 aa).

This sequence belongs to the nucleosome assembly protein (NAP) family.

It is found in the cytoplasm. It localises to the nucleus. Functionally, may be involved in sperm differentiation and proliferation. The sequence is that of Testis-specific Y-encoded protein 3 (TSPY3) from Homo sapiens (Human).